Reading from the N-terminus, the 104-residue chain is Small ribosomal subunit protein bS16 (104 aa).

It belongs to the bacterial ribosomal protein bS16 family.

The chain is Small ribosomal subunit protein bS16 from Wolbachia pipientis subsp. Culex pipiens (strain wPip).